A 209-amino-acid chain; its full sequence is 3-demethoxyubiquinol 3-hydroxylase (209 aa).

Fe cation-binding residues include E58, E88, H91, E140, E172, and H175.

Belongs to the COQ7 family. The cofactor is Fe cation.

The protein localises to the cell membrane. The enzyme catalyses a 5-methoxy-2-methyl-3-(all-trans-polyprenyl)benzene-1,4-diol + AH2 + O2 = a 3-demethylubiquinol + A + H2O. It participates in cofactor biosynthesis; ubiquinone biosynthesis. Functionally, catalyzes the hydroxylation of 2-nonaprenyl-3-methyl-6-methoxy-1,4-benzoquinol during ubiquinone biosynthesis. The sequence is that of 3-demethoxyubiquinol 3-hydroxylase from Polynucleobacter asymbioticus (strain DSM 18221 / CIP 109841 / QLW-P1DMWA-1) (Polynucleobacter necessarius subsp. asymbioticus).